The sequence spans 631 residues: Phosphomethylpyrimidine synthase (631 aa).

Residues Asn239, Met268, Tyr297, His333, 353–355, 394–397, and Glu433 each bind substrate; these read SRG and DGLR. Residue His437 participates in Zn(2+) binding. Tyr460 is a binding site for substrate. His501 is a binding site for Zn(2+). Residues Cys581, Cys584, and Cys589 each contribute to the [4Fe-4S] cluster site.

It belongs to the ThiC family. Homodimer. It depends on [4Fe-4S] cluster as a cofactor.

The catalysed reaction is 5-amino-1-(5-phospho-beta-D-ribosyl)imidazole + S-adenosyl-L-methionine = 4-amino-2-methyl-5-(phosphooxymethyl)pyrimidine + CO + 5'-deoxyadenosine + formate + L-methionine + 3 H(+). It participates in cofactor biosynthesis; thiamine diphosphate biosynthesis. Functionally, catalyzes the synthesis of the hydroxymethylpyrimidine phosphate (HMP-P) moiety of thiamine from aminoimidazole ribotide (AIR) in a radical S-adenosyl-L-methionine (SAM)-dependent reaction. The protein is Phosphomethylpyrimidine synthase of Salmonella arizonae (strain ATCC BAA-731 / CDC346-86 / RSK2980).